Reading from the N-terminus, the 234-residue chain is Large ribosomal subunit protein uL1 (234 aa).

Belongs to the universal ribosomal protein uL1 family. As to quaternary structure, part of the 50S ribosomal subunit.

Binds directly to 23S rRNA. The L1 stalk is quite mobile in the ribosome, and is involved in E site tRNA release. Functionally, protein L1 is also a translational repressor protein, it controls the translation of the L11 operon by binding to its mRNA. The protein is Large ribosomal subunit protein uL1 of Helicobacter acinonychis (strain Sheeba).